The primary structure comprises 129 residues: DNA-directed RNA polymerase III subunit rpc9 (129 aa).

It belongs to the eukaryotic RPC9 RNA polymerase subunit family. In terms of assembly, component of the RNA polymerase III (Pol III) complex.

The protein localises to the cytoplasm. Its subcellular location is the nucleus. Functionally, DNA-dependent RNA polymerase catalyzes the transcription of DNA into RNA using the four ribonucleoside triphosphates as substrates. Specific peripheric component of RNA polymerase III which synthesizes small RNAs, such as 5S rRNA and tRNAs. This chain is DNA-directed RNA polymerase III subunit rpc9 (rpc17), found in Schizosaccharomyces pombe (strain 972 / ATCC 24843) (Fission yeast).